Reading from the N-terminus, the 339-residue chain is DNA-directed RNA polymerase RPB7 homolog (339 aa).

The protein belongs to the Asfivirus DNA-directed RNA polymerase RPB7 homolog family. Part of the viral DNA-directed RNA polymerase that consists of 8 polII-like subunits (RPB1, RPB2, RPB3, RPB5, RPB6, RPB7, RPB9, RPB10), a capping enzyme and a termination factor.

It is found in the host cytoplasm. The protein resides in the virion. Functionally, component of the DNA-directed RNA polymerase (RNAP) that catalyzes the transcription in the cytoplasm of viral DNA into RNA using the four ribonucleoside triphosphates as substrates. This is DNA-directed RNA polymerase RPB7 homolog from African swine fever virus (strain Badajoz 1971 Vero-adapted) (Ba71V).